The chain runs to 104 residues: Small ribosomal subunit protein uS10 (104 aa).

It belongs to the universal ribosomal protein uS10 family. As to quaternary structure, part of the 30S ribosomal subunit.

Functionally, involved in the binding of tRNA to the ribosomes. The sequence is that of Small ribosomal subunit protein uS10 from Ralstonia nicotianae (strain ATCC BAA-1114 / GMI1000) (Ralstonia solanacearum).